We begin with the raw amino-acid sequence, 232 residues long: Small ribosomal subunit protein uS2 (232 aa).

It belongs to the universal ribosomal protein uS2 family.

This Desulforamulus reducens (strain ATCC BAA-1160 / DSM 100696 / MI-1) (Desulfotomaculum reducens) protein is Small ribosomal subunit protein uS2.